We begin with the raw amino-acid sequence, 647 residues long: Putative pre-mRNA-splicing factor ATP-dependent RNA helicase C20H4.09 (647 aa).

A Helicase ATP-binding domain is found at 35-199 (LYAVEQNQIT…FGQDKVCTMS (165 aa)). 48 to 55 (GHTGCGKT) contacts ATP. Positions 146-149 (DEVH) match the DEAH box motif. A Helicase C-terminal domain is found at 219-398 (YVDSAIETVI…PLVLFLKGLG (180 aa)).

The protein belongs to the DEAD box helicase family. DEAH subfamily.

It is found in the nucleus. It carries out the reaction ATP + H2O = ADP + phosphate + H(+). In terms of biological role, pre-mRNA processing factor involved in disassembly of spliceosomes after the release of mature mRNA. The protein is Putative pre-mRNA-splicing factor ATP-dependent RNA helicase C20H4.09 of Schizosaccharomyces pombe (strain 972 / ATCC 24843) (Fission yeast).